A 160-amino-acid polypeptide reads, in one-letter code: V-type proton ATPase subunit c (160 aa).

The Lumenal segment spans residues 1–6 (MSDLCP). Residues 7–27 (VYAPFFGSIGCAAAIVFTCFG) form a helical membrane-spanning segment. Residues 28-53 (ASYGTAKSGVGICATSVTRPDLLVKN) are Cytoplasmic-facing. Residues 54–74 (VVPVVMAGIIAIYGLVVSVLV) traverse the membrane as a helical segment. The Lumenal segment spans residues 75 to 90 (SDSLSQKQALYTGFIQ). Residues 91-111 (LGAGLSVGLSGLAAGFAIGIV) traverse the membrane as a helical segment. Residues 112-129 (GDAGVRGTAQQPRLFVGM) lie on the Cytoplasmic side of the membrane. The chain crosses the membrane as a helical span at residues 130 to 150 (ILILIFAEVLGLYGLIVALLL). Residues 151-160 (NSRASQDVTC) lie on the Lumenal side of the membrane.

Belongs to the V-ATPase proteolipid subunit family. In terms of assembly, V-ATPase is a heteromultimeric enzyme composed of a peripheral catalytic V1 complex (components A to H) attached to an integral membrane V0 proton pore complex (components: a, c, c', c'', d, e, f and VOA1). The decameric c-ring forms the proton-conducting pore, and is composed of eight proteolipid subunits c, one subunit c' and one subunit c''.

The protein resides in the vacuole membrane. Its function is as follows. Proton-conducting pore forming subunit of the V0 complex of vacuolar(H+)-ATPase (V-ATPase), a multisubunit enzyme composed of a peripheral complex (V1) that hydrolyzes ATP and a membrane integral complex (V0) that translocates protons. V-ATPase is responsible for acidifying and maintaining the pH of intracellular compartments. The protein is V-type proton ATPase subunit c (VMA3) of Candida tropicalis (Yeast).